The primary structure comprises 92 residues: MATEQTILVGKKPTTNYVIATVMAFNAGIKRVVLKARGAAISKAVSTAVMVRDRFLPGKVQIRDVKLLSDKVQGQGGRERTVAAVEIVLEMA.

Lysine 11 carries the post-translational modification N6-acetyllysine.

Belongs to the histone-like Alba family. Post-translationally, acetylated. Acetylation at Lys-11 decreases DNA-binding affinity.

It localises to the cytoplasm. Its subcellular location is the chromosome. In terms of biological role, binds double-stranded DNA tightly but without sequence specificity. Involved in DNA compaction. The sequence is that of DNA/RNA-binding protein Alba from Pyrobaculum calidifontis (strain DSM 21063 / JCM 11548 / VA1).